The following is a 130-amino-acid chain: Small ribosomal subunit protein uS11 (130 aa).

This sequence belongs to the universal ribosomal protein uS11 family. Part of the 30S ribosomal subunit. Interacts with proteins S7 and S18. Binds to IF-3.

In terms of biological role, located on the platform of the 30S subunit, it bridges several disparate RNA helices of the 16S rRNA. Forms part of the Shine-Dalgarno cleft in the 70S ribosome. The protein is Small ribosomal subunit protein uS11 of Aliarcobacter butzleri (strain RM4018) (Arcobacter butzleri).